The following is a 357-amino-acid chain: Protein RecA (357 aa).

An ATP-binding site is contributed by 67 to 74 (GPESSGKT).

This sequence belongs to the RecA family.

Its subcellular location is the cytoplasm. Functionally, can catalyze the hydrolysis of ATP in the presence of single-stranded DNA, the ATP-dependent uptake of single-stranded DNA by duplex DNA, and the ATP-dependent hybridization of homologous single-stranded DNAs. It interacts with LexA causing its activation and leading to its autocatalytic cleavage. The sequence is that of Protein RecA from Shewanella oneidensis (strain ATCC 700550 / JCM 31522 / CIP 106686 / LMG 19005 / NCIMB 14063 / MR-1).